Consider the following 286-residue polypeptide: Co-chaperone protein DjlA (286 aa).

Topologically, residues 1–6 (MQFIGK) are periplasmic. A helical membrane pass occupies residues 7–31 (IIGFFIGYKLFGGLFGGLLGIFIGH). Topologically, residues 32 to 286 (LADKKLYELG…DLICKTKGWK (255 aa)) are cytoplasmic. The region spanning 220–286 (DAYTVLGINE…DLICKTKGWK (67 aa)) is the J domain.

Homodimer.

It is found in the cell inner membrane. Regulatory DnaK co-chaperone. Direct interaction between DnaK and DjlA is needed for the induction of the wcaABCDE operon, involved in the synthesis of a colanic acid polysaccharide capsule, possibly through activation of the RcsB/RcsC phosphotransfer signaling pathway. The colanic acid capsule may help the bacterium survive conditions outside the host. This chain is Co-chaperone protein DjlA, found in Haemophilus ducreyi (strain 35000HP / ATCC 700724).